The chain runs to 980 residues: BEM1-interacting protein 1 (980 aa).

In terms of domain architecture, SH3 spans 13–77 (KSFPLYIAVN…PAVFTKRIAI (65 aa)). Residues Ser104, Ser106, and Ser128 each carry the phosphoserine modification. Residues 139–163 (SGSVEQEVSKSPTRVPEVSTPQLQD) form a disordered region. The span at 141–150 (SVEQEVSKSP) shows a compositional bias: polar residues. Phosphothreonine occurs at positions 151 and 158. Position 209 is a phosphoserine (Ser209). In terms of domain architecture, SAM spans 228 to 292 (WSPEEVTDYF…FKEIRNIKSA (65 aa)). 2 disordered regions span residues 333–356 (SKCN…ELQR) and 390–438 (IFES…KNKN). A phosphoserine mark is found at Ser393 and Ser412. The segment covering 397–412 (APKPPSYPSPVQPPQS) has biased composition (pro residues). Positions 415-438 (FNNRYTNNNARFPPQTTYPPKNKN) are enriched in polar residues. Ser525 and Ser528 each carry phosphoserine. Positions 544–762 (SSFDEEETKQ…AKKQQTSAFT (219 aa)) are disordered. Over residues 573–582 (HSRDASLSEM) the composition is skewed to basic and acidic residues. Residues Ser589, Ser590, and Ser593 each carry the phosphoserine modification. 2 stretches are compositionally biased toward low complexity: residues 589–608 (SSIL…SPTK) and 621–638 (HSRS…QSYS). Residues Ser644 and Ser655 each carry the phosphoserine modification. 2 stretches are compositionally biased toward polar residues: residues 645-662 (LVTS…SKSN) and 669-683 (ETPT…VSQP). Residues 687-703 (KHKHKHKHKSKHKHKNS) are compositionally biased toward basic residues. The residue at position 735 (Ser735) is a Phosphoserine. The span at 737–746 (SELTQKSTKS) shows a compositional bias: polar residues. The 120-residue stretch at 776-895 (TADCSGWMSK…WLSAIIKATI (120 aa)) folds into the PH domain. Thr919 is modified (phosphothreonine). The segment at 930 to 980 (LRDAEEEEGRDQFGWDDTQNKRNSNYPIEQDQFETSDYLESSAFEYPGGRL) is disordered. A compositionally biased stretch (polar residues) spans 950 to 968 (KRNSNYPIEQDQFETSDYL).

Interacts with BEM1.

It localises to the bud. The protein localises to the bud neck. In terms of biological role, functions redundantly with BOI2 to promote the fusion of secretory vesicles with the plasma membrane at sites of polarized growth. The chain is BEM1-interacting protein 1 from Saccharomyces cerevisiae (strain ATCC 204508 / S288c) (Baker's yeast).